A 391-amino-acid chain; its full sequence is Phosphoglycerate kinase (391 aa).

Residues 21 to 23 (DLN), arginine 36, 59 to 62 (HLGR), arginine 113, and arginine 146 contribute to the substrate site. ATP is bound by residues lysine 197, glutamate 319, and 345-348 (GGDT).

It belongs to the phosphoglycerate kinase family. In terms of assembly, monomer.

The protein localises to the cytoplasm. The enzyme catalyses (2R)-3-phosphoglycerate + ATP = (2R)-3-phospho-glyceroyl phosphate + ADP. It participates in carbohydrate degradation; glycolysis; pyruvate from D-glyceraldehyde 3-phosphate: step 2/5. This Colwellia psychrerythraea (strain 34H / ATCC BAA-681) (Vibrio psychroerythus) protein is Phosphoglycerate kinase.